Reading from the N-terminus, the 316-residue chain is Biotin synthase (316 aa).

In terms of domain architecture, Radical SAM core spans Thr36–Arg264. The [4Fe-4S] cluster site is built by Cys51, Cys55, and Cys58. Cys96, Cys127, Cys187, and Arg259 together coordinate [2Fe-2S] cluster.

Belongs to the radical SAM superfamily. Biotin synthase family. Homodimer. [4Fe-4S] cluster serves as cofactor. Requires [2Fe-2S] cluster as cofactor.

It carries out the reaction (4R,5S)-dethiobiotin + (sulfur carrier)-SH + 2 reduced [2Fe-2S]-[ferredoxin] + 2 S-adenosyl-L-methionine = (sulfur carrier)-H + biotin + 2 5'-deoxyadenosine + 2 L-methionine + 2 oxidized [2Fe-2S]-[ferredoxin]. It participates in cofactor biosynthesis; biotin biosynthesis; biotin from 7,8-diaminononanoate: step 2/2. Its function is as follows. Catalyzes the conversion of dethiobiotin (DTB) to biotin by the insertion of a sulfur atom into dethiobiotin via a radical-based mechanism. The chain is Biotin synthase from Gluconacetobacter diazotrophicus (strain ATCC 49037 / DSM 5601 / CCUG 37298 / CIP 103539 / LMG 7603 / PAl5).